A 161-amino-acid polypeptide reads, in one-letter code: tRNA-acetylating toxin 1 (161 aa).

The acetyl-CoA site is built by leucine 92, valine 94, histidine 99, glycine 100, glycine 102, glycine 104, alanine 105, leucine 132, and glutamate 135. Tyrosine 140 is an active-site residue. Histidine 142 is an acetyl-CoA binding site.

This sequence belongs to the acetyltransferase family. GNAT subfamily. As to quaternary structure, homodimer (in absence of antitoxin). Forms a complex with cognate antitoxin TacA1. Forms a 4:2 antitoxin:toxin complex with cognate antitoxin TacA1.

The catalysed reaction is glycyl-tRNA(Gly) + acetyl-CoA = N-acetylglycyl-tRNA(Gly) + CoA + H(+). Toxic component of a type II toxin-antitoxin (TA) system. Acetylates tRNA and inhibits translation, does not acetylate uncharged tRNA. Upon expression in situ acetylates only Gly-tRNA(Gly). In vitro acetylates mainly Gly and Ile/Leu. Upon induction of the toxin gene in lag phase in rich medium (but not mid-exponential phase) the lag phase is extended by several hours, locking bacteria in a non-growth state. Neutralized only by cognate antitoxin TacA1 (A8), but not by TacA2 or TacA3. Its toxic effect is neutralized by expression of peptidyl-tRNA hydrolase (pth) in lag phase. NAD-dependent protein deacylase (cobB) also play a role in detoxifying TacT targets. Expression increases persister cell formation, which is also abolished by either cognate antitoxin or Pth expression. Plays a role in persister cell formation. Its function is as follows. The TacA1-TacT1 complex binds (and probably represses) its own promoter DNA but not that of tacA3-tacT3, it does not repress the tacA3-tacT3 promoter. This chain is tRNA-acetylating toxin 1, found in Salmonella typhimurium (strain 14028s / SGSC 2262).